We begin with the raw amino-acid sequence, 129 residues long: Transcription antitermination protein NusB (129 aa).

This sequence belongs to the NusB family.

Involved in transcription antitermination. Required for transcription of ribosomal RNA (rRNA) genes. Binds specifically to the boxA antiterminator sequence of the ribosomal RNA (rrn) operons. The sequence is that of Transcription antitermination protein NusB from Bacillus licheniformis (strain ATCC 14580 / DSM 13 / JCM 2505 / CCUG 7422 / NBRC 12200 / NCIMB 9375 / NCTC 10341 / NRRL NRS-1264 / Gibson 46).